The sequence spans 73 residues: DNA gyrase inhibitor YacG (73 aa).

Residues Cys-14, Cys-17, Cys-30, and Cys-34 each coordinate Zn(2+). The tract at residues 54–73 is disordered; sequence AEQADDTAGPGAAEDDTDSH.

It belongs to the DNA gyrase inhibitor YacG family. As to quaternary structure, interacts with GyrB. It depends on Zn(2+) as a cofactor.

Functionally, inhibits all the catalytic activities of DNA gyrase by preventing its interaction with DNA. Acts by binding directly to the C-terminal domain of GyrB, which probably disrupts DNA binding by the gyrase. The chain is DNA gyrase inhibitor YacG from Hyphomonas neptunium (strain ATCC 15444).